The sequence spans 389 residues: N-terminal EF-hand calcium-binding protein 2 (389 aa).

Position 10 is an omega-N-methylarginine (R10). R42 bears the Asymmetric dimethylarginine mark. EF-hand domains are found at residues 63–98 (GGTA…GVLN) and 99–132 (EKEL…HMGD). Ca(2+)-binding residues include D76, N78, D80, K82, E87, D110, D112, T114, H116, and E121. Positions 173–198 (LKETANQIQSLLSSVESAVEAIEEQT) form a coiled coil. Positions 289–377 (QLVRQEMAVC…LSQPEALSQI (89 aa)) constitute an ABM domain.

Interacts (calcium-dependent) with ADORA2A and GRM5. In terms of tissue distribution, expressed in the iris, in the ciliary margin of the retina and in the inner portion of the neural retina. Expressed in the spinal dorsal horn with especially strong expression in lamina IIi; found in excitory synaptic boutons (at protein level).

The protein localises to the cytoplasm. It localises to the cell projection. The protein resides in the dendrite. It is found in the axon. Its subcellular location is the cell membrane. Its function is as follows. May act as a signaling scaffold protein that senses intracellular calcium. Can modulate ligand-induced internalization of ADORA2A and coupling efficiency of mGluR5/GRM5; for both receptors may regulate signaling activity such as promoting MAPK1/3 (ERK1/2) activation. This chain is N-terminal EF-hand calcium-binding protein 2 (Necab2), found in Mus musculus (Mouse).